The primary structure comprises 434 residues: GTPase Obg (434 aa).

In terms of domain architecture, Obg spans 2–160 (PTFVDQTKIE…RVLRLELKLL (159 aa)). The region spanning 161–334 (ADVGLVGFPS…LMNDTATLVE (174 aa)) is the OBG-type G domain. GTP is bound by residues 167-174 (GFPSVGKS), 192-196 (FTTLT), 214-217 (DLPG), 284-287 (SQMD), and 315-317 (SSV). Mg(2+)-binding residues include Ser-174 and Thr-194. Residues 356–434 (YKAPQKNEFT…IGKFVFEFVQ (79 aa)) enclose the OCT domain.

Belongs to the TRAFAC class OBG-HflX-like GTPase superfamily. OBG GTPase family. As to quaternary structure, monomer. Mg(2+) is required as a cofactor.

Its subcellular location is the cytoplasm. An essential GTPase which binds GTP, GDP and possibly (p)ppGpp with moderate affinity, with high nucleotide exchange rates and a fairly low GTP hydrolysis rate. Plays a role in control of the cell cycle, stress response, ribosome biogenesis and in those bacteria that undergo differentiation, in morphogenesis control. This is GTPase Obg from Lactobacillus helveticus (strain DPC 4571).